Consider the following 419-residue polypeptide: MTKIAYLECPSGIAGDMCLGSLVDSGVPLEYLIEQLKKLEIQDEYRLWSEKVYRQGQLATKVHVELVEHDPSNHPSQNTHHHHHHHTRHLPEIESMIKGANLPPQSREWSLAVFRQLAIAEGAVHGIEPEKVHFHEVGAIDAIIDIVGTCLGLDWLGIEALYCSEMPTGGGTVWAAHGRLPVPVPAVIKLWESRQVPVYSNNINKELVTPTGAAIAVTLAKHFGSPPAMKVQKIGLGAGSNELPIPNILRLWIGESNNPDQVQQLSEKIAVLETQIDDLNPQVIGYVFEALLAAGALDVFTQAIGMKKSRPGILLTVICTPEKVADCQNIIFKETTTLGIRHRIQNRSILQREIQQITTDYGVARVKIASQGIGDNKTILNVQAEYEDCVELALKSNQPLQIIQQIVLNTWYHQNCLKI.

The disordered stretch occupies residues 69-90 (HDPSNHPSQNTHHHHHHHTRHL). The span at 79–88 (THHHHHHHTR) shows a compositional bias: basic residues.

The protein belongs to the LarC family.

This is Putative nickel insertion protein from Rippkaea orientalis (strain PCC 8801 / RF-1) (Cyanothece sp. (strain PCC 8801)).